The primary structure comprises 90 residues: Putative defensin-like protein 243 (90 aa).

The first 19 residues, 1–19 (MKVEVIFLASCVLFSLIHA), serve as a signal peptide directing secretion. Disulfide bonds link Cys-33–Cys-88, Cys-43–Cys-72, Cys-53–Cys-82, and Cys-70–Cys-84.

Belongs to the DEFL family.

The protein localises to the secreted. The sequence is that of Putative defensin-like protein 243 (SCRL9) from Arabidopsis thaliana (Mouse-ear cress).